The sequence spans 377 residues: uncharacterized protein (377 aa).

Polar residues-rich tracts occupy residues 1 to 11 (MSSIQGTSGSS) and 31 to 43 (PSGQ…AVGK). 3 disordered regions span residues 1–43 (MSSI…AVGK), 109–141 (SSEE…IARN), and 328–377 (SSSP…RGFQ). Residues 334 to 345 (EDPRSLRDRLRD) show a composition bias toward basic and acidic residues.

This sequence belongs to the chlamydial CPn_0499/CT_392/TC_0671 family.

This is an uncharacterized protein from Chlamydia trachomatis serovar D (strain ATCC VR-885 / DSM 19411 / UW-3/Cx).